A 259-amino-acid polypeptide reads, in one-letter code: tRNA (guanine-N(7)-)-methyltransferase (259 aa).

Positions 1–74 are disordered; that stretch reads MGHHGQMHAQ…PAEDPDRPGP (74 aa). Residues E91, E116, N143, and D166 each coordinate S-adenosyl-L-methionine. The active site involves D166. Substrate-binding positions include K170, D202, and 238–241; that span reads TKYE.

It belongs to the class I-like SAM-binding methyltransferase superfamily. TrmB family.

The catalysed reaction is guanosine(46) in tRNA + S-adenosyl-L-methionine = N(7)-methylguanosine(46) in tRNA + S-adenosyl-L-homocysteine. The protein operates within tRNA modification; N(7)-methylguanine-tRNA biosynthesis. Catalyzes the formation of N(7)-methylguanine at position 46 (m7G46) in tRNA. The chain is tRNA (guanine-N(7)-)-methyltransferase from Mycobacterium avium (strain 104).